Consider the following 610-residue polypeptide: Manganese lipoxygenase (610 aa).

The N-terminal stretch at 1–16 is a signal peptide; the sequence is MVALLIFLGIFTCVET. The region spanning 47–610 is the Lipoxygenase domain; sequence FTLPNEDDEI…PGVIPFYLSV (564 aa). N157 and N259 each carry an N-linked (GlcNAc...) asparagine glycan. Mn(2+) contacts are provided by H290 and H295. A glycan (N-linked (GlcNAc...) asparagine) is linked at N386. H475 and N479 together coordinate Mn(2+). Residue N540 is glycosylated (N-linked (GlcNAc...) asparagine). Residue V610 participates in Mn(2+) binding.

It belongs to the lipoxygenase family. Manganese lipoxygenase subfamily. Mn(2+) is required as a cofactor. N- and O-glycosylated.

It is found in the secreted. It carries out the reaction (9Z,12Z)-octadecadienoate + O2 = (11S)-hydroperoxy-(9Z,12Z)-octadecadienoate. The enzyme catalyses (9Z,12Z)-octadecadienoate + O2 = (11R)-hydroperoxy-(9Z,12Z)-octadecadienoate. It catalyses the reaction (9Z,12Z)-octadecadienoate + O2 = (13S)-hydroperoxy-(9Z,11E)-octadecadienoate. The catalysed reaction is (9Z,12Z,15Z)-octadecatrienoate + O2 = (11S)-hydroperoxy-(9Z,12Z,15Z)-octadecatrienoate. Functionally, lipoxygenase that metabolizes linoleic and alpha-linolenic acids to 9-, 11- and 13-hydroperoxy fatty acids. Oxidizes linoleic acid to mainly 11R-, 13S- and racemic 9-HPODE, and alpha-linolenic acid to 11-HPOTrE. The chain is Manganese lipoxygenase from Fusarium oxysporum (strain Fo5176) (Fusarium vascular wilt).